The sequence spans 311 residues: Putative dihydroorotate dehydrogenase A (fumarate) (311 aa).

Residues K45, 69 to 73 (NSMGL), and N128 each bind substrate. An FMN-binding site is contributed by 45–46 (KT). Residue N128 coordinates FMN. C131 functions as the Nucleophile in the catalytic mechanism. Residues K165 and V193 each coordinate FMN. Position 194–195 (194–195 (NS)) interacts with substrate. FMN-binding positions include G220, 248 to 249 (GG), and 270 to 271 (GT).

Belongs to the dihydroorotate dehydrogenase family. Type 1 subfamily. Homodimer. Requires FMN as cofactor.

The protein localises to the cytoplasm. It carries out the reaction (S)-dihydroorotate + fumarate = orotate + succinate. It functions in the pathway pyrimidine metabolism; UMP biosynthesis via de novo pathway. In terms of biological role, catalyzes the conversion of dihydroorotate to orotate with fumarate as the electron acceptor. The sequence is that of Putative dihydroorotate dehydrogenase A (fumarate) (pyrD) from Streptococcus equi subsp. equi (strain 4047).